The chain runs to 192 residues: Anthranilate synthase component 2 (192 aa).

The Glutamine amidotransferase type-1 domain occupies 3-192 (NILLLDNIDS…LQRVIQWTKI (190 aa)). Position 57–59 (57–59 (GPG)) interacts with L-glutamine. Residue cysteine 84 is the Nucleophile; for GATase activity of the active site. Residues glutamine 88 and 134-135 (SL) contribute to the L-glutamine site. Residues histidine 170 and glutamate 172 each act as for GATase activity in the active site.

Heterotetramer consisting of two non-identical subunits: a beta subunit (TrpG) and a large alpha subunit (TrpE).

The catalysed reaction is chorismate + L-glutamine = anthranilate + pyruvate + L-glutamate + H(+). Its pathway is amino-acid biosynthesis; L-tryptophan biosynthesis; L-tryptophan from chorismate: step 1/5. Functionally, part of a heterotetrameric complex that catalyzes the two-step biosynthesis of anthranilate, an intermediate in the biosynthesis of L-tryptophan. In the first step, the glutamine-binding beta subunit (TrpG) of anthranilate synthase (AS) provides the glutamine amidotransferase activity which generates ammonia as a substrate that, along with chorismate, is used in the second step, catalyzed by the large alpha subunit of AS (TrpE) to produce anthranilate. In the absence of TrpG, TrpE can synthesize anthranilate directly from chorismate and high concentrations of ammonia. This Buchnera aphidicola subsp. Baizongia pistaciae (strain Bp) protein is Anthranilate synthase component 2 (trpG).